The following is a 527-amino-acid chain: Phosphoenolpyruvate carboxykinase (ATP) (527 aa).

Positions 56, 192, and 198 each coordinate substrate. Residues Lys-198, His-217, and 233-241 (GLSGTGKTT) contribute to the ATP site. The Mn(2+) site is built by Lys-198 and His-217. Asp-254 provides a ligand contact to Mn(2+). ATP is bound by residues Glu-282, Arg-319, and Thr-444. Substrate is bound at residue Arg-319.

This sequence belongs to the phosphoenolpyruvate carboxykinase (ATP) family. It depends on Mn(2+) as a cofactor.

The protein resides in the cytoplasm. The enzyme catalyses oxaloacetate + ATP = phosphoenolpyruvate + ADP + CO2. It participates in carbohydrate biosynthesis; gluconeogenesis. Its function is as follows. Involved in the gluconeogenesis. Catalyzes the conversion of oxaloacetate (OAA) to phosphoenolpyruvate (PEP) through direct phosphoryl transfer between the nucleoside triphosphate and OAA. The sequence is that of Phosphoenolpyruvate carboxykinase (ATP) from Bacillus velezensis (strain DSM 23117 / BGSC 10A6 / LMG 26770 / FZB42) (Bacillus amyloliquefaciens subsp. plantarum).